The primary structure comprises 187 residues: Protein GrpE (187 aa).

The tract at residues 1–22 (MADEQNLDAQAQDQAAEAGAGD) is disordered. The segment covering 7-22 (LDAQAQDQAAEAGAGD) has biased composition (low complexity).

Belongs to the GrpE family. As to quaternary structure, homodimer.

It localises to the cytoplasm. Its function is as follows. Participates actively in the response to hyperosmotic and heat shock by preventing the aggregation of stress-denatured proteins, in association with DnaK and GrpE. It is the nucleotide exchange factor for DnaK and may function as a thermosensor. Unfolded proteins bind initially to DnaJ; upon interaction with the DnaJ-bound protein, DnaK hydrolyzes its bound ATP, resulting in the formation of a stable complex. GrpE releases ADP from DnaK; ATP binding to DnaK triggers the release of the substrate protein, thus completing the reaction cycle. Several rounds of ATP-dependent interactions between DnaJ, DnaK and GrpE are required for fully efficient folding. The protein is Protein GrpE of Pseudomonas syringae pv. tomato (strain ATCC BAA-871 / DC3000).